A 263-amino-acid polypeptide reads, in one-letter code: uncharacterized protein (263 aa).

A Response regulatory domain is found at T6–K121. D58 carries the post-translational modification 4-aspartylphosphate. In terms of domain architecture, HTH LytTR-type spans I158–M263.

This is an uncharacterized protein from Vibrio parahaemolyticus serotype O3:K6 (strain RIMD 2210633).